A 369-amino-acid polypeptide reads, in one-letter code: Histidinol-phosphate aminotransferase (369 aa).

The disordered stretch occupies residues M1–P39. At K230 the chain carries N6-(pyridoxal phosphate)lysine.

This sequence belongs to the class-II pyridoxal-phosphate-dependent aminotransferase family. Histidinol-phosphate aminotransferase subfamily. Homodimer. Pyridoxal 5'-phosphate serves as cofactor.

It catalyses the reaction L-histidinol phosphate + 2-oxoglutarate = 3-(imidazol-4-yl)-2-oxopropyl phosphate + L-glutamate. Its pathway is amino-acid biosynthesis; L-histidine biosynthesis; L-histidine from 5-phospho-alpha-D-ribose 1-diphosphate: step 7/9. This is Histidinol-phosphate aminotransferase (hisC) from Streptomyces avermitilis (strain ATCC 31267 / DSM 46492 / JCM 5070 / NBRC 14893 / NCIMB 12804 / NRRL 8165 / MA-4680).